A 58-amino-acid chain; its full sequence is Metallothionein-1 (58 aa).

A beta region spans residues 1-28 (PGPCCKDKCECAEGGCKTGCKCTSCRCA). Residues Cys-4, Cys-5, Cys-9, Cys-11, Cys-16, Cys-20, Cys-22, Cys-25, Cys-27, Cys-30, Cys-33, Cys-37, Cys-39, Cys-45, Cys-49, Cys-53, Cys-55, and Cys-56 each coordinate a divalent metal cation. Residues 29–58 (PCEKCTSGCKCPSKDECAKTCSKPCSCCXX) are alpha.

This sequence belongs to the metallothionein superfamily. Type 3 family.

In terms of biological role, metallothioneins have a high content of cysteine residues that bind various heavy metals. The different forms of lobster metallothioneins may have different biological functions. Class I MTS in marine crustacea are involved in the sequestration of elevated levels of heavy-metal ions. Binds 6 metal ions. Known to bind cadmium. This is Metallothionein-1 from Homarus americanus (American lobster).